A 145-amino-acid polypeptide reads, in one-letter code: Cell division protein SepF (145 aa).

The protein belongs to the SepF family. Homodimer. Interacts with FtsZ.

The protein resides in the cytoplasm. Functionally, cell division protein that is part of the divisome complex and is recruited early to the Z-ring. Probably stimulates Z-ring formation, perhaps through the cross-linking of FtsZ protofilaments. Its function overlaps with FtsA. The sequence is that of Cell division protein SepF from Lactobacillus helveticus (strain DPC 4571).